A 593-amino-acid chain; its full sequence is Meiosis-specific APC/C activator protein AMA1 (593 aa).

A compositionally biased stretch (basic residues) spans 1-11 (MATPHLYHRYN). The segment at 1–26 (MATPHLYHRYNSKSSNKNINSSGNST) is disordered. Low complexity predominate over residues 12–25 (SKSSNKNINSSGNS). Residues 29–35 (DRFIPKS) carry the C-box motif. Low complexity predominate over residues 94–109 (SSISSSSESQVTRSGS). Residues 94-125 (SSISSSSESQVTRSGSARASRNDYSKLTKEQK) are disordered. Positions 113 to 125 (SRNDYSKLTKEQK) are enriched in basic and acidic residues. WD repeat units lie at residues 226 to 264 (RNDF…VSIL), 271 to 310 (EKRD…HSSN), 323 to 364 (ESFK…FPIK), 388 to 427 (AQAQ…KPIK), 432 to 474 (PHKA…LLDE), and 525 to 564 (PNPL…EEII).

It belongs to the WD repeat CDC20/Fizzy family. In terms of assembly, interacts with CDC16.

Activator protein that regulates the ubiquitin ligase activity and substrate specificity of the anaphase promoting complex/cyclosome (APC/C). Required for the ubiquitination and subsequent degradation of the B-type cyclin CLB1 by the APC/C complex during meiosis. Required for meiosis I, late meiotic gene expression and spore wall assembly. In Saccharomyces cerevisiae (strain ATCC 204508 / S288c) (Baker's yeast), this protein is Meiosis-specific APC/C activator protein AMA1 (AMA1).